The following is a 401-amino-acid chain: Tumor necrosis factor receptor superfamily member 11B (401 aa).

An N-terminal signal peptide occupies residues 1–21; sequence MNNLLCCALVFLDISIKWTTQ. 4 TNFR-Cys repeats span residues 24–62, 65–105, 107–142, and 145–185; these read FPPKYLHYDEETSHQLLCDKCPPGTYLKQHCTAKWKTVC, CPDH…NRVC, CKEGRYLEIEFCLKHRSCPPGFGVVQAGTPERNTVC, and CPDG…DNIC. Cystine bridges form between C41–C54, C44–C62, C65–C80, C83–C97, C87–C105, C107–C118, C124–C142, and C145–C160. Residue N98 is glycosylated (N-linked (GlcNAc...) asparagine). N-linked (GlcNAc...) asparagine glycans are attached at residues N152, N165, and N178. C166 and C185 are oxidised to a cystine. 2 consecutive Death domains span residues 198–269 and 270–365; these read DVTL…IVKK and IIQD…TQSL. N289 is a glycosylation site (N-linked (GlcNAc...) asparagine).

In terms of assembly, homodimer. Interacts with TNFSF10 and TNFSF11. In terms of processing, N-glycosylated. Contains sialic acid residues. Post-translationally, the N-terminus is blocked. In terms of tissue distribution, highly expressed in adult lung, heart, kidney, liver, spleen, thymus, prostate, ovary, small intestine, thyroid, lymph node, trachea, adrenal gland, testis, and bone marrow. Detected at very low levels in brain, placenta and skeletal muscle. Highly expressed in fetal kidney, liver and lung.

The protein resides in the secreted. Functionally, acts as a decoy receptor for TNFSF11/RANKL and thereby neutralizes its function in osteoclastogenesis. Inhibits the activation of osteoclasts and promotes osteoclast apoptosis in vitro. Bone homeostasis seems to depend on the local ratio between TNFSF11 and TNFRSF11B. May also play a role in preventing arterial calcification. May act as decoy receptor for TNFSF10/TRAIL and protect against apoptosis. TNFSF10/TRAIL binding blocks the inhibition of osteoclastogenesis. This Homo sapiens (Human) protein is Tumor necrosis factor receptor superfamily member 11B (TNFRSF11B).